Reading from the N-terminus, the 610-residue chain is UvrABC system protein C (610 aa).

Residues 16 to 94 (SQPGVYRMYD…IKLYQPRYNV (79 aa)) form the GIY-YIG domain. In terms of domain architecture, UVR spans 204–239 (DQVLTQLISRMETASQNLEFEEAARIRDQIQAVRRV).

Belongs to the UvrC family. As to quaternary structure, interacts with UvrB in an incision complex.

The protein resides in the cytoplasm. Functionally, the UvrABC repair system catalyzes the recognition and processing of DNA lesions. UvrC both incises the 5' and 3' sides of the lesion. The N-terminal half is responsible for the 3' incision and the C-terminal half is responsible for the 5' incision. This is UvrABC system protein C from Escherichia coli (strain ATCC 8739 / DSM 1576 / NBRC 3972 / NCIMB 8545 / WDCM 00012 / Crooks).